A 452-amino-acid polypeptide reads, in one-letter code: Tubulin alpha-6 chain (452 aa).

Positions 11, 69, 138, 142, 143, 177, 204, and 226 each coordinate GTP. Glu-69 provides a ligand contact to Mg(2+). The active site involves Glu-252.

The protein belongs to the tubulin family. As to quaternary structure, dimer of alpha and beta chains. A typical microtubule is a hollow water-filled tube with an outer diameter of 25 nm and an inner diameter of 15 nM. Alpha-beta heterodimers associate head-to-tail to form protofilaments running lengthwise along the microtubule wall with the beta-tubulin subunit facing the microtubule plus end conferring a structural polarity. Microtubules usually have 13 protofilaments but different protofilament numbers can be found in some organisms and specialized cells. Requires Mg(2+) as cofactor.

The protein localises to the cytoplasm. The protein resides in the cytoskeleton. It is found in the spindle. The enzyme catalyses GTP + H2O = GDP + phosphate + H(+). Tubulin is the major constituent of microtubules, a cylinder consisting of laterally associated linear protofilaments composed of alpha- and beta-tubulin heterodimers. Microtubules grow by the addition of GTP-tubulin dimers to the microtubule end, where a stabilizing cap forms. Below the cap, tubulin dimers are in GDP-bound state, owing to GTPase activity of alpha-tubulin. The protein is Tubulin alpha-6 chain (TUBA6) of Naegleria pringsheimi (Amoeba).